Here is a 128-residue protein sequence, read N- to C-terminus: NADH-quinone oxidoreductase subunit A (128 aa).

A run of 3 helical transmembrane segments spans residues 5–25 (IPIL…VVIA), 72–92 (LTAM…PWAV), and 100–120 (FALV…AYVW).

Belongs to the complex I subunit 3 family. In terms of assembly, NDH-1 is composed of 14 different subunits. Subunits NuoA, H, J, K, L, M, N constitute the membrane sector of the complex.

Its subcellular location is the cell membrane. The catalysed reaction is a quinone + NADH + 5 H(+)(in) = a quinol + NAD(+) + 4 H(+)(out). Functionally, NDH-1 shuttles electrons from NADH, via FMN and iron-sulfur (Fe-S) centers, to quinones in the respiratory chain. The immediate electron acceptor for the enzyme in this species is believed to be a menaquinone. Couples the redox reaction to proton translocation (for every two electrons transferred, four hydrogen ions are translocated across the cytoplasmic membrane), and thus conserves the redox energy in a proton gradient. In Mycobacterium bovis (strain ATCC BAA-935 / AF2122/97), this protein is NADH-quinone oxidoreductase subunit A.